The primary structure comprises 853 residues: Auxin response factor 23 (853 aa).

The segment at P118–H141 is disordered. The TF-B3 DNA-binding region spans F149–M251. 2 disordered regions span residues E422–M484 and P647–S723. Over residues P425–K455 the composition is skewed to polar residues. The segment covering E672–D686 has biased composition (basic and acidic residues). The span at P706 to S723 shows a compositional bias: polar residues. One can recognise a PB1 domain in the interval R725–E809. The disordered stretch occupies residues P815–C853. A compositionally biased stretch (polar residues) spans L843 to C853.

The protein belongs to the ARF family. Homodimers and heterodimers. Interacts with CRL1. In terms of tissue distribution, expressed in roots, culms, leaves and young panicles.

The protein resides in the nucleus. In terms of biological role, auxin response factors (ARFs) are transcriptional factors that bind specifically to the DNA sequence 5'-TGTCTC-3' found in the auxin-responsive promoter elements (AuxREs). This Oryza sativa subsp. japonica (Rice) protein is Auxin response factor 23 (ARF23).